Consider the following 203-residue polypeptide: uncharacterized protein (203 aa).

Residues 171–191 (VGYLSIWLKEYWYLVVLFVLI) traverse the membrane as a helical segment.

The protein resides in the membrane. This is an uncharacterized protein from Methanocaldococcus jannaschii (strain ATCC 43067 / DSM 2661 / JAL-1 / JCM 10045 / NBRC 100440) (Methanococcus jannaschii).